The following is a 305-amino-acid chain: Oligopeptide transport system permease protein OppC (305 aa).

6 consecutive transmembrane segments (helical) span residues 43 to 63, 105 to 125, 166 to 185, 212 to 232, 236 to 256, and 274 to 294; these read AMVG…APMF, ISIF…VIWG, LFTI…ARIV, LFKH…TLTV, IFTE…LASW, and LFFP…VGDG. In terms of domain architecture, ABC transmembrane type-1 spans 103-292; the sequence is ARISIFIGVA…ITMFGFNVVG (190 aa).

It belongs to the binding-protein-dependent transport system permease family. OppBC subfamily. The complex is composed of two ATP-binding proteins (OppD and OppF), two transmembrane proteins (OppB and OppC) and a solute-binding protein (OppA).

It is found in the cell membrane. Part of the ABC transporter complex OppABCDF involved in the uptake of oligopeptides. Probably responsible for the translocation of the substrate across the membrane. Required for sporulation and genetic competence. The chain is Oligopeptide transport system permease protein OppC from Bacillus subtilis (strain 168).